Here is an 89-residue protein sequence, read N- to C-terminus: UPF0297 protein MGAS9429_Spy1808 (89 aa).

The protein belongs to the UPF0297 family.

In Streptococcus pyogenes serotype M12 (strain MGAS9429), this protein is UPF0297 protein MGAS9429_Spy1808.